The primary structure comprises 108 residues: Guanine nucleotide-binding protein subunit gamma (108 aa).

Residue Cys104 is the site of S-palmitoyl cysteine attachment. Cys105 is modified (cysteine methyl ester). A lipid anchor (S-farnesyl cysteine) is attached at Cys105. Positions 106 to 108 (VIS) are cleaved as a propeptide — removed in mature form.

This sequence belongs to the G protein gamma family. G proteins are composed of 3 units, alpha, beta and gamma.

It localises to the membrane. This is Guanine nucleotide-binding protein subunit gamma from Yarrowia lipolytica (strain CLIB 122 / E 150) (Yeast).